Consider the following 392-residue polypeptide: DNA-directed RNA polymerase subunit Rpo1C (392 aa).

It belongs to the RNA polymerase beta' chain family. As to quaternary structure, part of the RNA polymerase complex.

It localises to the cytoplasm. It catalyses the reaction RNA(n) + a ribonucleoside 5'-triphosphate = RNA(n+1) + diphosphate. DNA-dependent RNA polymerase (RNAP) catalyzes the transcription of DNA into RNA using the four ribonucleoside triphosphates as substrates. Forms part of the jaw domain. The sequence is that of DNA-directed RNA polymerase subunit Rpo1C from Sulfurisphaera tokodaii (strain DSM 16993 / JCM 10545 / NBRC 100140 / 7) (Sulfolobus tokodaii).